The following is an 89-amino-acid chain: Mapacalcine (89 aa).

Glutamine amide is present on glutamine 89.

In terms of assembly, homodimer. Post-translationally, contains disulfide bonds which may also be involved in dimerization.

Blocks calcium currents via interaction with a yet unknown target protein. Has no effect on L-type, T-type, N-type or P/Q-type voltage-gated calcium channels (VGCC). Has no effect on voltage-gated potassium or chloride channels. Blocks non-L-type VGCC calcium currents in mouse duodenal myocytes (IC(50)=0.2 uM). Blocks calcium influx induced by hypoxia/reoxygenation in rat hepatocytes. The chain is Mapacalcine from Pione vastifica (Boring sponge).